The primary structure comprises 1450 residues: Protein TIC 214 (1450 aa).

6 helical membrane-spanning segments follow: residues 29 to 49, 61 to 81, 86 to 106, 132 to 152, 166 to 186, and 213 to 233; these read FGLY…IVVI, VMAF…IYYT, LFIK…FYWQ, FFDS…PIFF, LNFF…FFNA, and IIPI…HIPF.

It belongs to the TIC214 family. Part of the Tic complex.

It localises to the plastid. Its subcellular location is the chloroplast inner membrane. In terms of biological role, involved in protein precursor import into chloroplasts. May be part of an intermediate translocation complex acting as a protein-conducting channel at the inner envelope. This Chaetosphaeridium globosum (Charophycean green alga) protein is Protein TIC 214.